The chain runs to 380 residues: Probable acyl-CoA dehydrogenase YngJ (380 aa).

FAD-binding positions include 123–132, 156–158, Arg-269, and 337–341; these read FGLTEPNAGS, WIT, and QIHGG. The active-site Proton acceptor is the Glu-364. 366 to 368 is an FAD binding site; sequence TSE.

It belongs to the acyl-CoA dehydrogenase family. FAD is required as a cofactor.

The enzyme catalyses a 2,3-saturated acyl-CoA + A = a 2,3-dehydroacyl-CoA + AH2. The protein is Probable acyl-CoA dehydrogenase YngJ (yngJ) of Bacillus subtilis (strain 168).